The sequence spans 194 residues: Mpv17-like protein (194 aa).

Residues 1 to 14 (MASWWRAFPQAARR) lie on the Cytoplasmic side of the membrane. A helical transmembrane segment spans residues 15–34 (YPWPTNVLLYAGLFSAGDAL). Residues 16-55 (PWPTNVLLYAGLFSAGDALQQRLRGGPADWRQTRRVATLA) form a targeting to peroxisomes region. Topologically, residues 35–50 (QQRLRGGPADWRQTRR) are lumenal. A helical membrane pass occupies residues 51 to 67 (VATLAVTFHGNFNYVWL). Residues 68–91 (RLLERALPGRAPRTVLAKVLCDQT) are Cytoplasmic-facing. A helical membrane pass occupies residues 92–110 (VGGPIALSAFYVGMSVLQG). The Lumenal segment spans residues 111-150 (KDDIFLDLKQKFWNTYKSGLMYWPFVQLTNFSLVPVHWRT). Residues 151–168 (AYTGLCAFLWATFLCFSQ) traverse the membrane as a helical segment. Topologically, residues 169–194 (QSGDGTLQSIFIFLRRKEASDKSPEK) are cytoplasmic.

This sequence belongs to the peroxisomal membrane protein PXMP2/4 family. In terms of tissue distribution, isoform 1 and isoform 3 are expressed in the kidney (at protein level). Isoform 1 is expressed in the kidney, spleen, heart, brain, lung and liver. Isoform 3 is expressed in the kidney. Isoform 1 and isoform 3 expression increase during development, reache their highest level in adulthood and decrease with aging.

Its subcellular location is the peroxisome membrane. It is found in the cytoplasm. Participates in reactive oxygen species metabolism by up- or down-regulation of the genes of antioxidant enzymes. Protective against the mitochondrial apoptotic cascade. In terms of biological role, participates in reactive oxygen species metabolism by up- or down-regulation of the genes of antioxidant enzymes. The polypeptide is Mpv17-like protein (Mpv17l) (Mus musculus (Mouse)).